Here is a 168-residue protein sequence, read N- to C-terminus: DNA damage-inducible transcript 3 protein (168 aa).

Residues 10–18 (FETVSSWEL) are interaction with TRIB3. Positions 10–26 (FETVSSWELEAWYEDLQ) are N-terminal. Ser14, Ser15, Ser30, and Ser31 each carry phosphoserine; by CK2. The segment at 34-130 (IGGTYISSPG…EKEQENERKV (97 aa)) is disordered. Residues 73 to 88 (TSTSQSPRSPDSSQSS) show a composition bias toward low complexity. 2 positions are modified to phosphoserine; by MAPK14: Ser78 and Ser81. Residues 98–161 (QGRTRKRKQS…ETTRRALIDR (64 aa)) enclose the bZIP domain. The interval 100-129 (RTRKRKQSGQCAARAGKQRMKEKEQENERK) is basic motif. Positions 118 to 130 (RMKEKEQENERKV) are enriched in basic and acidic residues. Residues 133–147 (LAEENERLKLEIERL) are leucine-zipper.

Belongs to the bZIP family. As to quaternary structure, heterodimer. Interacts with TCF7L2/TCF4, EP300/P300, HDAC1, HDAC5 and HDAC6. Interacts with TRIB3 which blocks its association with EP300/P300. Interacts with FOXO3, CEBPB and ATF4. Ubiquitinated, leading to its degradation by the proteasome. Post-translationally, phosphorylation at serine residues by MAPK14 enhances its transcriptional activation activity while phosphorylation at serine residues by CK2 inhibits its transcriptional activation activity.

It is found in the cytoplasm. The protein localises to the nucleus. Functionally, multifunctional transcription factor in ER stress response. Plays an essential role in the response to a wide variety of cell stresses and induces cell cycle arrest and apoptosis in response to ER stress. Plays a dual role both as an inhibitor of CCAAT/enhancer-binding protein (C/EBP) function and as an activator of other genes. Acts as a dominant-negative regulator of C/EBP-induced transcription: dimerizes with members of the C/EBP family, impairs their association with C/EBP binding sites in the promoter regions, and inhibits the expression of C/EBP regulated genes. Positively regulates the transcription of TRIB3, IL6, IL8, IL23, TNFRSF10B/DR5, PPP1R15A/GADD34, BBC3/PUMA, BCL2L11/BIM and ERO1L. Negatively regulates; expression of BCL2 and MYOD1, ATF4-dependent transcriptional activation of asparagine synthetase (ASNS), CEBPA-dependent transcriptional activation of hepcidin (HAMP) and CEBPB-mediated expression of peroxisome proliferator-activated receptor gamma (PPARG). Inhibits the canonical Wnt signaling pathway by binding to TCF7L2/TCF4, impairing its DNA-binding properties and repressing its transcriptional activity. Plays a regulatory role in the inflammatory response through the induction of caspase-11 (CASP4/CASP11) which induces the activation of caspase-1 (CASP1) and both these caspases increase the activation of pro-IL1B to mature IL1B which is involved in the inflammatory response. Acts as a major regulator of postnatal neovascularization through regulation of endothelial nitric oxide synthase (NOS3)-related signaling. The sequence is that of DNA damage-inducible transcript 3 protein (Ddit3) from Rattus norvegicus (Rat).